A 273-amino-acid polypeptide reads, in one-letter code: UPF0380 protein YafZ (273 aa).

Belongs to the UPF0380 family.

This is UPF0380 protein YafZ (yafZ) from Escherichia coli (strain K12).